The primary structure comprises 515 residues: Calcium-dependent protein kinase 2 (515 aa).

The interval 1-51 (MGNCCPGSGDAEPASSDASTGNGSSSFKAGASPSSAPAQNKPPAPIGPVLG) is disordered. Residue Gly2 is the site of N-myristoyl glycine attachment. Positions 14-38 (ASSDASTGNGSSSFKAGASPSSAPA) are enriched in low complexity. The region spanning 61–319 (YTIGKELGRG…AYEVLNHPWI (259 aa)) is the Protein kinase domain. Residues 67–75 (LGRGQFGVT) and Lys90 each bind ATP. Asp185 serves as the catalytic Proton acceptor. The segment at 325-355 (APDTPLDNAVMNRLKQFRAMNQFKKAALRVI) is autoinhibitory domain. 4 consecutive EF-hand domains span residues 362 to 397 (EEIR…QGTK), 398 to 433 (LTEA…MNRM), 434 to 469 (DREE…KGLL), and 473 to 504 (DIKD…GNPE). Positions 375, 377, 379, 381, 386, 411, 413, 415, 417, 422, 447, 449, 451, 453, 458, 482, 484, 486, 488, and 493 each coordinate Ca(2+).

It belongs to the protein kinase superfamily. Ser/Thr protein kinase family. CDPK subfamily. In terms of tissue distribution, expressed in heading panicles, spikelets and mature pollen grains.

The protein localises to the membrane. It catalyses the reaction L-seryl-[protein] + ATP = O-phospho-L-seryl-[protein] + ADP + H(+). The enzyme catalyses L-threonyl-[protein] + ATP = O-phospho-L-threonyl-[protein] + ADP + H(+). Activated by calcium. Autophosphorylation may play an important role in the regulation of the kinase activity. May play a role in signal transduction pathways that involve calcium as a second messenger. In Oryza sativa subsp. japonica (Rice), this protein is Calcium-dependent protein kinase 2.